The sequence spans 509 residues: 2,3-bisphosphoglycerate-independent phosphoglycerate mutase (509 aa).

Mn(2+) is bound by residues D12 and S62. Catalysis depends on S62, which acts as the Phosphoserine intermediate. Substrate-binding positions include H123, 153 to 154 (RD), R185, R191, 260 to 263 (RPDR), and K333. Mn(2+) contacts are provided by D400, H404, D441, H442, and H460.

The protein belongs to the BPG-independent phosphoglycerate mutase family. In terms of assembly, monomer. The cofactor is Mn(2+).

It carries out the reaction (2R)-2-phosphoglycerate = (2R)-3-phosphoglycerate. The protein operates within carbohydrate degradation; glycolysis; pyruvate from D-glyceraldehyde 3-phosphate: step 3/5. Functionally, catalyzes the interconversion of 2-phosphoglycerate and 3-phosphoglycerate. The sequence is that of 2,3-bisphosphoglycerate-independent phosphoglycerate mutase from Clostridium kluyveri (strain ATCC 8527 / DSM 555 / NBRC 12016 / NCIMB 10680 / K1).